The following is a 521-amino-acid chain: GMP synthase [glutamine-hydrolyzing] (521 aa).

The Glutamine amidotransferase type-1 domain occupies 9–203 (KILILDFGSQ…ISGICQCEKN (195 aa)). The active-site Nucleophile is cysteine 86. Catalysis depends on residues histidine 177 and glutamate 179. The region spanning 204–396 (WTTDNIIAKL…LSIPPHIIYR (193 aa)) is the GMPS ATP-PPase domain. Residue 231 to 237 (SGGVDSL) participates in ATP binding.

Homodimer.

The catalysed reaction is XMP + L-glutamine + ATP + H2O = GMP + L-glutamate + AMP + diphosphate + 2 H(+). Its pathway is purine metabolism; GMP biosynthesis; GMP from XMP (L-Gln route): step 1/1. Catalyzes the synthesis of GMP from XMP. The chain is GMP synthase [glutamine-hydrolyzing] from Ruthia magnifica subsp. Calyptogena magnifica.